An 85-amino-acid chain; its full sequence is Large ribosomal subunit protein bL27 (85 aa).

Belongs to the bacterial ribosomal protein bL27 family.

The sequence is that of Large ribosomal subunit protein bL27 from Cellvibrio japonicus (strain Ueda107) (Pseudomonas fluorescens subsp. cellulosa).